The following is a 215-amino-acid chain: Ribose-5-phosphate isomerase A (215 aa).

Substrate is bound by residues 26-29 (TGST), 79-82 (DGAD), and 92-95 (KGGG). The Proton acceptor role is filled by E101. K119 contacts substrate.

Belongs to the ribose 5-phosphate isomerase family. In terms of assembly, homodimer.

It carries out the reaction aldehydo-D-ribose 5-phosphate = D-ribulose 5-phosphate. Its pathway is carbohydrate degradation; pentose phosphate pathway; D-ribose 5-phosphate from D-ribulose 5-phosphate (non-oxidative stage): step 1/1. Its function is as follows. Catalyzes the reversible conversion of ribose-5-phosphate to ribulose 5-phosphate. This chain is Ribose-5-phosphate isomerase A, found in Xanthomonas oryzae pv. oryzae (strain PXO99A).